We begin with the raw amino-acid sequence, 57 residues long: Potassium channel toxin alpha-KTx 1.5 (57 aa).

A signal peptide spans methionine 1–alanine 20. Glutamine 21 carries the post-translational modification Pyrrolidone carboxylic acid. 3 disulfides stabilise this stretch: cysteine 27–cysteine 48, cysteine 33–cysteine 53, and cysteine 37–cysteine 55.

This sequence belongs to the short scorpion toxin superfamily. Potassium channel inhibitor family. Alpha-KTx 01 subfamily. Expressed by the venom gland.

Its subcellular location is the secreted. Functionally, potent blocker of both large-conductance calcium-activated potassium channels (KCa1.1/KCNMA1) and voltage-gated potassium channels (Kv1.3/KCNA3). Has also been shown to moderately inhibit Kv1.2/KCNA2 and weakly inhibit Kv1.1/KCNA1 channels, as well as 5-hydroxytryptamine 3 receptors (HTR3A). The protein is Potassium channel toxin alpha-KTx 1.5 of Olivierus martensii (Manchurian scorpion).